Consider the following 297-residue polypeptide: Large ribosomal subunit protein uL18 (297 aa).

Position 2 is an N-acetylglycine (Gly-2). 2 positions are modified to N6-acetyllysine: Lys-5 and Lys-48. A Phosphoserine modification is found at Ser-185. Lys-220 bears the N6-acetyllysine; alternate mark. Lys-220 is covalently cross-linked (Glycyl lysine isopeptide (Lys-Gly) (interchain with G-Cter in SUMO1); alternate). Lys-220 is covalently cross-linked (Glycyl lysine isopeptide (Lys-Gly) (interchain with G-Cter in SUMO2); alternate). Thr-232 is modified (phosphothreonine). Residues 253–297 are disordered; sequence YEKKPKKEVKKKRWNRPKMSLAQKKDRVAQKKASFLRAQERAAES. Over residues 258–268 the composition is skewed to basic residues; it reads KKEVKKKRWNR. The residue at position 272 (Ser-272) is a Phosphoserine.

It belongs to the universal ribosomal protein uL18 family. Component of the large ribosomal subunit (LSU). Part of the 5S RNP complex, which is a LSU subcomplex composed of the 5S RNA, RPL5 and RPL11. Component of a hexameric 5S RNP precursor complex, composed of 5S RNA, RRS1, RPF2/BXDC1, RPL5, RPL11 and HEATR3; this complex acts as a precursor for ribosome assembly. Interacts with isoform 1 of NVL in an ATP-dependent manner. Interacts with RRP1B. Interacts with IPO5, IPO7 and KPNB1; these interactions may be involved in RPL5 nuclear import for the assembly of ribosomal subunits.

The protein localises to the cytoplasm. The protein resides in the nucleus. It localises to the nucleolus. Component of the ribosome, a large ribonucleoprotein complex responsible for the synthesis of proteins in the cell. The small ribosomal subunit (SSU) binds messenger RNAs (mRNAs) and translates the encoded message by selecting cognate aminoacyl-transfer RNA (tRNA) molecules. The large subunit (LSU) contains the ribosomal catalytic site termed the peptidyl transferase center (PTC), which catalyzes the formation of peptide bonds, thereby polymerizing the amino acids delivered by tRNAs into a polypeptide chain. The nascent polypeptides leave the ribosome through a tunnel in the LSU and interact with protein factors that function in enzymatic processing, targeting, and the membrane insertion of nascent chains at the exit of the ribosomal tunnel. As part of the 5S RNP/5S ribonucleoprotein particle it is an essential component of the LSU, required for its formation and the maturation of rRNAs. It also couples ribosome biogenesis to p53/TP53 activation. As part of the 5S RNP it accumulates in the nucleoplasm and inhibits MDM2, when ribosome biogenesis is perturbed, mediating the stabilization and the activation of TP53. In Homo sapiens (Human), this protein is Large ribosomal subunit protein uL18 (RPL5).